A 358-amino-acid chain; its full sequence is Core-capsid bridging protein (358 aa).

Residues 296–331 form a disordered region; sequence PSITPTPGYRGTTFKPSRTRSTRRRRSVRRRSRRTA. The segment covering 312-329 has biased composition (basic residues); the sequence is SRTRSTRRRRSVRRRSRR.

Belongs to the adenoviridae core-capsid bridging protein family. Monomer. Homodimer. Exists in equilibrium between monomers and dimers in solution. Interacts with the histone-like nucleoprotein; this interactions bridge the virus core to the capsid. Interacts with core protein X; this interactions bridge the virus core to the capsid. Interacts with the endosome lysis protein VI; this interactions bridge the virus core to the capsid. Interacts with the peripentonal hexons. Interacts with host NPM1; this interaction might play a role in virus assembly.

The protein resides in the virion. It is found in the host nucleus. It localises to the host nucleolus. Its function is as follows. Associates loosely with the viral DNA to form an outer shell around the nucleoprotein-DNA complex and links it with the capsid by binding the endosome lysis protein. Dissociates from the viral genome during entry. Might be involved in nuclear capsid assembly of the viral particles through its association with NPM1/nucleophosmin. This chain is Core-capsid bridging protein, found in Human adenovirus F serotype 40 (HAdV-40).